A 404-amino-acid chain; its full sequence is D-galactonate dehydratase family member PC1_0802 (404 aa).

Substrate contacts are provided by asparagine 37 and histidine 122. Tyrosine 159 (proton donor/acceptor) is an active-site residue. Aspartate 212 serves as a coordination point for Mg(2+). The active-site Proton donor/acceptor is histidine 214. Positions 238 and 264 each coordinate Mg(2+). Substrate is bound by residues glutamate 264, arginine 285, histidine 314, aspartate 318, and glutamate 341.

Belongs to the mandelate racemase/muconate lactonizing enzyme family. GalD subfamily. Requires Mg(2+) as cofactor.

It catalyses the reaction D-mannonate = 2-dehydro-3-deoxy-D-gluconate + H2O. Has low D-mannonate dehydratase activity (in vitro), suggesting that this is not a physiological substrate and that it has no significant role in D-mannonate degradation in vivo. Has no detectable activity with a panel of 70 other acid sugars (in vitro). The chain is D-galactonate dehydratase family member PC1_0802 from Pectobacterium carotovorum subsp. carotovorum (strain PC1).